We begin with the raw amino-acid sequence, 150 residues long: PTS system galactitol-specific EIIA component (150 aa).

The PTS EIIA type-2 domain occupies 1–144; it reads MTNLFVRSGI…TQLKEYFTKY (144 aa). Residue histidine 62 is the Tele-phosphohistidine intermediate of the active site. Histidine 62 is subject to Phosphohistidine; by HPr.

In terms of assembly, forms a complex with one each of subunit of GatA, GatB and 2 subunits of GatC.

The protein localises to the cytoplasm. In terms of biological role, the phosphoenolpyruvate-dependent sugar phosphotransferase system (sugar PTS), a major carbohydrate active transport system, catalyzes the phosphorylation of incoming sugar substrates concomitantly with their translocation across the cell membrane. The enzyme II complex composed of GatA, GatB and GatC is involved in galactitol transport. This Escherichia coli O157:H7 protein is PTS system galactitol-specific EIIA component (gatA).